The primary structure comprises 461 residues: Lysosomal dipeptide transporter MFSD1 (461 aa).

The segment covering 1-13 has biased composition (basic and acidic residues); the sequence is MADREEHQGLLDG. Residues 1-22 are disordered; it reads MADREEHQGLLDGDRDEDEGDK. Residues 10 to 11 carry the Dileucine internalization motif motif; that stretch reads LL. A run of 10 helical transmembrane segments spans residues 37–57, 81–101, 111–131, 134–154, 264–284, 302–322, 331–351, 359–379, 390–410, and 416–436; these read LLHR…SYFC, QLYA…GFLL, TVIF…GALA, FWLM…LAVA, LWLI…FIGL, AINS…GFLV, WVML…FTFW, LLGV…AFVV, FMQS…GSIL, and LFLE…VVLL.

The protein belongs to the major facilitator superfamily. Homodimer. Interacts with lysosomal protein GLMP (via lumenal domain); the interaction starts while both proteins are still in the endoplasmic reticulum and is required for stabilization of MFSD1 in lysosomes but has no direct effect on its targeting to lysosomes or transporter activity.

It is found in the lysosome membrane. It catalyses the reaction L-alpha-aminoacyl-L-arginine(out) = L-alpha-aminoacyl-L-arginine(in). It carries out the reaction L-arginyl-L-alpha-amino acid(out) = L-arginyl-L-alpha-amino acid(in). The enzyme catalyses L-arginyl-glycine(out) = L-arginyl-glycine(in). The catalysed reaction is L-alpha-aminoacyl-L-lysine(out) = L-alpha-aminoacyl-L-lysine(in). It catalyses the reaction L-aspartyl-L-lysine(out) = L-aspartyl-L-lysine(in). It carries out the reaction L-alanyl-L-lysine(out) = L-alanyl-L-lysine(in). The enzyme catalyses L-lysyl-L-alpha-amino acid(out) = L-lysyl-L-alpha-amino acid(in). The catalysed reaction is L-lysyl-L-alanine(out) = L-lysyl-L-alanine(in). It catalyses the reaction L-lysyl-L-lysine(out) = L-lysyl-L-lysine(in). It carries out the reaction L-lysyl-glycine(out) = L-lysyl-glycine(in). The enzyme catalyses L-alpha-aminoacyl-L-histidine(out) = L-alpha-aminoacyl-L-histidine(in). The catalysed reaction is L-histidyl-L-alpha-amino acid(out) = L-histidyl-L-alpha-amino acid(in). It catalyses the reaction L-histidyl-glycine(out) = L-histidyl-glycine(in). Lysosomal dipeptide uniporter that selectively exports lysine, arginine or histidine-containing dipeptides with a net positive charge from the lysosome lumen into the cytosol. Could play a role in a specific type of protein O-glycosylation indirectly regulating macrophages migration and tissue invasion. Also essential for liver homeostasis. The polypeptide is Lysosomal dipeptide transporter MFSD1 (mfsd1) (Danio rerio (Zebrafish)).